Reading from the N-terminus, the 70-residue chain is ATP synthase subunit c (70 aa).

2 helical membrane-spanning segments follow: residues 3-23 (ALAA…IGIA) and 44-64 (LFFI…VIAI).

It belongs to the ATPase C chain family. As to quaternary structure, F-type ATPases have 2 components, F(1) - the catalytic core - and F(0) - the membrane proton channel. F(1) has five subunits: alpha(3), beta(3), gamma(1), delta(1), epsilon(1). F(0) has three main subunits: a(1), b(2) and c(10-14). The alpha and beta chains form an alternating ring which encloses part of the gamma chain. F(1) is attached to F(0) by a central stalk formed by the gamma and epsilon chains, while a peripheral stalk is formed by the delta and b chains.

Its subcellular location is the cell membrane. In terms of biological role, f(1)F(0) ATP synthase produces ATP from ADP in the presence of a proton or sodium gradient. F-type ATPases consist of two structural domains, F(1) containing the extramembraneous catalytic core and F(0) containing the membrane proton channel, linked together by a central stalk and a peripheral stalk. During catalysis, ATP synthesis in the catalytic domain of F(1) is coupled via a rotary mechanism of the central stalk subunits to proton translocation. Key component of the F(0) channel; it plays a direct role in translocation across the membrane. A homomeric c-ring of between 10-14 subunits forms the central stalk rotor element with the F(1) delta and epsilon subunits. This chain is ATP synthase subunit c, found in Caldicellulosiruptor saccharolyticus (strain ATCC 43494 / DSM 8903 / Tp8T 6331).